The sequence spans 646 residues: Peptidylprolyl isomerase domain and WD repeat-containing protein 1 (646 aa).

Residues 1–50 (MATESGSDSQLRRRRRRDPEGSEKTELSEREPALAVAGSEENDDENEERW) are disordered. N-acetylalanine is present on Ala-2. Positions 17-32 (RDPEGSEKTELSEREP) are enriched in basic and acidic residues. WD repeat units lie at residues 88–126 (MHRDVITHVVCTKTDFIITASHDGHVKFWKKIEEGIEFV), 131–170 (SHLGVIESIAVSSEGALFCSVGDDKAMKVFDVVNFDMINM), 221–260 (LHVSPLTQIRLNPVYKAVVSSDKSGMIEYWTGPPHEYKFP), and 278–319 (KCKA…RVFD). Residues 490-645 (VSDSAIVHTS…EDVSIINITV (156 aa)) enclose the PPIase cyclophilin-type domain.

Belongs to the cyclophilin-type PPIase family. PPIL1 subfamily. As to quaternary structure, identified in the spliceosome C complex.

It is found in the nucleus. It catalyses the reaction [protein]-peptidylproline (omega=180) = [protein]-peptidylproline (omega=0). Its activity is regulated as follows. Inhibited by cyclosporin A (CsA). Functionally, PPIase that catalyzes the cis-trans isomerization of proline imidic peptide bonds in oligopeptides and may therefore assist protein folding. May be involved in pre-mRNA splicing. This is Peptidylprolyl isomerase domain and WD repeat-containing protein 1 from Mus musculus (Mouse).